Consider the following 523-residue polypeptide: uncharacterized protein (523 aa).

Residues 1 to 14 (MAVSKNIKSNVSTH) show a composition bias toward polar residues. 3 disordered regions span residues 1–36 (MAVS…VKKA), 51–187 (HSSE…VVSS), and 200–224 (QKQE…EMEK). Residues 87–97 (DNRGTRLKGDI) show a composition bias toward basic and acidic residues. 2 stretches are compositionally biased toward acidic residues: residues 117–130 (DMEE…DNEY) and 138–182 (QDDD…DDEN). Residues 200-210 (QKQEKEEEKQP) show a composition bias toward basic and acidic residues.

This sequence belongs to the AATF family.

This is an uncharacterized protein from Dictyostelium discoideum (Social amoeba).